Here is a 330-residue protein sequence, read N- to C-terminus: Elongation factor Ts (330 aa).

Residues 79–82 form an involved in Mg(2+) ion dislocation from EF-Tu region; sequence TDFV.

It belongs to the EF-Ts family.

It is found in the cytoplasm. In terms of biological role, associates with the EF-Tu.GDP complex and induces the exchange of GDP to GTP. It remains bound to the aminoacyl-tRNA.EF-Tu.GTP complex up to the GTP hydrolysis stage on the ribosome. This chain is Elongation factor Ts, found in Bacteroides thetaiotaomicron (strain ATCC 29148 / DSM 2079 / JCM 5827 / CCUG 10774 / NCTC 10582 / VPI-5482 / E50).